The following is a 163-amino-acid chain: uncharacterized protein (163 aa).

The disordered stretch occupies residues P128–V163. Residues K129 to V163 show a composition bias toward basic residues.

This is an uncharacterized protein from Sulfurisphaera tokodaii (strain DSM 16993 / JCM 10545 / NBRC 100140 / 7) (Sulfolobus tokodaii).